The chain runs to 1729 residues: 182 kDa tankyrase-1-binding protein (1729 aa).

A compositionally biased stretch (polar residues) spans 1-12; sequence MKVSTLRESSAM. Positions 1–151 are disordered; that stretch reads MKVSTLRESS…VRKAPAPFRP (151 aa). Serine 14 is modified (phosphoserine). Positions 46-63 are enriched in low complexity; sequence ALPAKPALPAKPSLLVPV. Residues 117-127 are compositionally biased toward basic and acidic residues; the sequence is TGKEEAGKEEP. Phosphothreonine is present on threonine 131. 3 positions are modified to phosphoserine: serine 178, serine 221, and serine 228. 3 disordered regions span residues 184–450, 484–603, and 657–880; these read GSRL…LAAL, PSGL…ESPL, and ETTQ…SSRD. An acidic region spans residues 210–1572; it reads DEDGSTLFRG…TEILDSAMYR (1363 aa). Residues 230–245 show a composition bias toward basic and acidic residues; sequence AECREEHSKTPEERSL. Threonine 239 is subject to Phosphothreonine. Phosphoserine is present on residues serine 287 and serine 301. Residues 352 to 363 show a composition bias toward low complexity; sequence PSPGLPAEGAPE. Residues 364 to 374 show a composition bias toward pro residues; the sequence is APRPSSPPPEV. A phosphoserine mark is found at serine 429, serine 435, serine 437, serine 494, and serine 498. 3 stretches are compositionally biased toward low complexity: residues 500 to 512, 524 to 541, and 572 to 583; these read ITEASEAAEAAEA, VSQQGQGAGSAPSGSGSS, and LPTTEGTPGLPL. Threonine 501 is subject to Phosphothreonine. 9 positions are modified to phosphoserine: serine 601, serine 672, serine 691, serine 695, serine 712, serine 724, serine 744, serine 762, and serine 806. Positions 738–753 are enriched in polar residues; the sequence is PQPSSFSPSSWCQGAS. Positions 803-812 are enriched in polar residues; sequence ASSSQDQSKV. The residue at position 833 (threonine 833) is a Phosphothreonine. 6 positions are modified to phosphoserine: serine 836, serine 851, serine 872, serine 877, serine 882, and serine 893. The segment covering 858–872 has biased composition (basic and acidic residues); sequence RDAELQDQEFGKRDS. Position 897 is a phosphotyrosine (tyrosine 897). The tract at residues 897–1083 is disordered; it reads YASQDANEQG…ADLEDGEMGK (187 aa). Residues serine 899, serine 920, serine 936, and serine 976 each carry the phosphoserine modification. Threonine 979 is modified (phosphothreonine). 17 positions are modified to phosphoserine: serine 983, serine 987, serine 1004, serine 1008, serine 1013, serine 1024, serine 1029, serine 1054, serine 1073, serine 1091, serine 1103, serine 1133, serine 1138, serine 1158, serine 1178, serine 1248, and serine 1253. Basic and acidic residues predominate over residues 1012–1021; the sequence is GSRDAGRPGE. Positions 1043 to 1054 are enriched in polar residues; the sequence is RDQSSWQNSDAS. Positions 1240-1302 are disordered; the sequence is EVGEGGGHSQ…GAVCSPGESK (63 aa). Phosphothreonine is present on threonine 1282. Phosphoserine occurs at positions 1297, 1328, 1331, 1383, and 1385. Residues 1362-1561 form a disordered region; the sequence is AREHGVGGVS…SPSQDFSFIE (200 aa). Over residues 1389–1400 the composition is skewed to basic and acidic residues; it reads EARDPLEARELG. The segment covering 1406–1419 has biased composition (polar residues); that stretch reads GPETQGEDYSSSSL. Serine 1435, serine 1439, serine 1450, serine 1452, serine 1473, serine 1476, serine 1503, and serine 1506 each carry phosphoserine. The interval 1450 to 1542 is tankyrase-binding; sequence SGSQGLLEEM…SDQGPAQTSR (93 aa). A Phosphothreonine modification is found at threonine 1518. Phosphoserine occurs at positions 1533, 1545, and 1558. At threonine 1563 the chain carries Phosphothreonine. A disordered region spans residues 1575–1729; it reads ANLGRKRGHR…QALKLKKKKV (155 aa). Residues 1577-1586 are compositionally biased toward basic residues; that stretch reads LGRKRGHRAP. The span at 1602–1615 shows a compositional bias: basic and acidic residues; sequence SDAHLFQDSTEPRA. Phosphoserine is present on residues serine 1620, serine 1621, and serine 1631. A Nuclear localization signal motif is present at residues 1629–1635; that stretch reads PQSRRTR. Lysine 1644 carries the post-translational modification N6-methyllysine. 3 positions are modified to phosphoserine: serine 1652, serine 1666, and serine 1715. Over residues 1665 to 1679 the composition is skewed to basic and acidic residues; sequence RSAEEGELAESKSSQ. Residues 1723–1729 carry the Nuclear localization signal motif; that stretch reads KLKKKKV.

Binds to the ANK repeat domain of TNKS1 and TNKS2. Post-translationally, ADP-ribosylated by TNKS1 (in vitro). In terms of tissue distribution, detected in testis, ovary, lung, skeletal muscle, heart, prostate and pancreas, and at very low levels in brain and peripheral blood leukocytes.

Its subcellular location is the nucleus. The protein localises to the cytoplasm. The protein resides in the cytoskeleton. It localises to the chromosome. The sequence is that of 182 kDa tankyrase-1-binding protein (TNKS1BP1) from Homo sapiens (Human).